A 396-amino-acid chain; its full sequence is Probable intron-encoded endonuclease aI3 (396 aa).

The disordered stretch occupies residues 51-90 (TNNTNNNNPADSSSYESRMRAAGNSNSNSNSNSDSNINNT). Residues 74–90 (NSNSNSNSNSDSNINNT) show a composition bias toward low complexity.

It belongs to the LAGLIDADG endonuclease family.

It is found in the mitochondrion. Functionally, mitochondrial DNA endonuclease involved in intron homing. This is Probable intron-encoded endonuclease aI3 (aI3) from Kluyveromyces lactis (strain ATCC 8585 / CBS 2359 / DSM 70799 / NBRC 1267 / NRRL Y-1140 / WM37) (Yeast).